Here is a 702-residue protein sequence, read N- to C-terminus: Ribosomal RNA large subunit methyltransferase K/L (702 aa).

Residues 43 to 154 (LVYQSLMWSR…KETASIALDL (112 aa)) enclose the THUMP domain.

The protein belongs to the methyltransferase superfamily. RlmKL family.

It is found in the cytoplasm. It carries out the reaction guanosine(2445) in 23S rRNA + S-adenosyl-L-methionine = N(2)-methylguanosine(2445) in 23S rRNA + S-adenosyl-L-homocysteine + H(+). The catalysed reaction is guanosine(2069) in 23S rRNA + S-adenosyl-L-methionine = N(2)-methylguanosine(2069) in 23S rRNA + S-adenosyl-L-homocysteine + H(+). Functionally, specifically methylates the guanine in position 2445 (m2G2445) and the guanine in position 2069 (m7G2069) of 23S rRNA. This chain is Ribosomal RNA large subunit methyltransferase K/L, found in Escherichia coli O139:H28 (strain E24377A / ETEC).